The following is a 446-amino-acid chain: Probable inactive lipase MT1628 (446 aa).

Belongs to the AB hydrolase superfamily. Lipase family.

This is Probable inactive lipase MT1628 from Mycobacterium tuberculosis (strain CDC 1551 / Oshkosh).